We begin with the raw amino-acid sequence, 492 residues long: Protein nucleotidyltransferase YdiU (492 aa).

Glycine 91, glycine 93, arginine 94, lysine 114, aspartate 126, glycine 127, arginine 180, and arginine 187 together coordinate ATP. The active-site Proton acceptor is the aspartate 256. Residues asparagine 257 and aspartate 266 each coordinate Mg(2+). Residue aspartate 266 participates in ATP binding.

Belongs to the SELO family. It depends on Mg(2+) as a cofactor. Mn(2+) serves as cofactor.

It catalyses the reaction L-seryl-[protein] + ATP = 3-O-(5'-adenylyl)-L-seryl-[protein] + diphosphate. The catalysed reaction is L-threonyl-[protein] + ATP = 3-O-(5'-adenylyl)-L-threonyl-[protein] + diphosphate. The enzyme catalyses L-tyrosyl-[protein] + ATP = O-(5'-adenylyl)-L-tyrosyl-[protein] + diphosphate. It carries out the reaction L-histidyl-[protein] + UTP = N(tele)-(5'-uridylyl)-L-histidyl-[protein] + diphosphate. It catalyses the reaction L-seryl-[protein] + UTP = O-(5'-uridylyl)-L-seryl-[protein] + diphosphate. The catalysed reaction is L-tyrosyl-[protein] + UTP = O-(5'-uridylyl)-L-tyrosyl-[protein] + diphosphate. Its function is as follows. Nucleotidyltransferase involved in the post-translational modification of proteins. It can catalyze the addition of adenosine monophosphate (AMP) or uridine monophosphate (UMP) to a protein, resulting in modifications known as AMPylation and UMPylation. In Synechococcus elongatus (strain ATCC 33912 / PCC 7942 / FACHB-805) (Anacystis nidulans R2), this protein is Protein nucleotidyltransferase YdiU.